The primary structure comprises 398 residues: ATP-dependent RNA helicase eIF4A (398 aa).

The short motif at 25–53 (DSFDAMNLRAELLRGVYAYGFERPSAIQQ) is the Q motif element. Positions 56-226 (IMPVIKGSDV…TKFMRDPVRI (171 aa)) constitute a Helicase ATP-binding domain. Residue 69 to 76 (AQSGTGKT) participates in ATP binding. A DEAD box motif is present at residues 174–177 (DEAD). A Helicase C-terminal domain is found at 237-398 (GIKQFYIAVE…EMPMNVADLI (162 aa)).

This sequence belongs to the DEAD box helicase family. eIF4A subfamily. In terms of assembly, component of the eIF4F complex, which composition varies with external and internal environmental conditions. It is composed of at least eIF4A, eIF4E and eIF4G.

It localises to the cytoplasm. It carries out the reaction ATP + H2O = ADP + phosphate + H(+). ATP-dependent RNA helicase which is a subunit of the eIF4F complex involved in cap recognition and is required for mRNA binding to ribosome. In the current model of translation initiation, eIF4A unwinds RNA secondary structures in the 5'-UTR of mRNAs which is necessary to allow efficient binding of the small ribosomal subunit, and subsequent scanning for the initiator codon. The polypeptide is ATP-dependent RNA helicase eIF4A (TIF1) (Coccidioides immitis (strain RS) (Valley fever fungus)).